Here is a 424-residue protein sequence, read N- to C-terminus: Attachment protein G3P (424 aa).

An N-terminal signal peptide occupies residues 1-18 (MKKLLFAIPLVVPFYSHS). The segment at 19–85 (AETVESCLAK…VPIGLAIPEN (67 aa)) is N1. 2 disulfides stabilise this stretch: C25–C54 and C64–C71. A disordered region spans residues 83–147 (PENEGGGSEG…NPNPSLEESQ (65 aa)). The G1 (Gly-rich linker) stretch occupies residues 86–104 (EGGGSEGGGSEGGGSEGGG). The span at 86-105 (EGGGSEGGGSEGGGSEGGGT) shows a compositional bias: gly residues. The interval 105–141 (TKPPEYGDTPIPGYTYINPLDGTYPPGTEQNPANPNP) is hinge. The segment covering 132–147 (TEQNPANPNPSLEESQ) has biased composition (polar residues). Residues 142 to 228 (SLEESQPLNT…CEYQGQSSDL (87 aa)) are N2. An intrachain disulfide couples C206 to C219. Residues 222 to 279 (QGQSSDLPQPPVNAGGGSGGGSGGGSEGGGSEGGGSEGGGSEGGGSGGGSGSGDFDYE) form a disordered region. Positions 235 to 273 (AGGGSGGGSGGGSEGGGSEGGGSEGGGSEGGGSGGGSGS) are enriched in gly residues. A not essential for gene 3 function region spans residues 253–262 (EGGGSEGGGS). The interval 275–424 (DFDYEKMANA…FANILRNKES (150 aa)) is CT. Residues 398-418 (VFAFLLYVATFMYVFSTFANI) traverse the membrane as a helical segment.

This sequence belongs to the inovirus G3P protein family. In terms of assembly, interacts with G6P; this interaction is required for proper integration of G3P and G6P into the virion. Interacts with G8P. Interacts with the tip of the host pilus. Interacts (via N-terminus) with host TolA. Interacts (via transmembrane domain) with host TolQ (via 2nd and 3rd transmembrane domains); this interaction allows the phage translocation across the host inner membrane. Interacts (via transmembrane domain) with host TolR (via transmembrane domain); this interaction allows the phage translocation across the host inner membrane.

The protein resides in the virion. Its subcellular location is the host membrane. Plays essential roles both in the penetration of the viral genome into the bacterial host via pilus retraction and in the extrusion process. During the initial step of infection, G3P mediates adsorption of the phage to its primary receptor, the tip of host F-pilus. Attachment of the phage causes pilus retraction bringing the viral particle into close proximity of the host cell inner membrane. Binding to the host pilus initiates a change in the G3P conformation, allowing subsequent interaction with the host entry receptors TolA, TolQ and TolR and penetration of the viral DNA into the host cytoplasm. In the extrusion process, G3P mediates the release of the membrane-anchored virion from the cell via its C-terminal domain. This chain is Attachment protein G3P (III), found in Enterobacteria phage fd (Bacteriophage fd).